The primary structure comprises 430 residues: MLDPNLLRNEPDAVAEKLARRGFKLDVDKLRALEERRKVLQVQTENLQAERNSRSKSIGQAKARGEDIEPLRLEVNKLGEELDQAKTELELLLAEIRDIALAIPNTPDDSVPVGKDENDNVEVKRWGTPREFDFEVRDHVTLGEMHAGLDFAAAVKLTGARFVVMKGQIAHLHRALAQFMLDLHTEQHGYSETYVPYLVNHDTLYGTGQLPKFAGDLFHTRPLDEEAESSNYALIPTAEVPLTNLVRDEIIDEDDLPIKLTAHSPCFRSEAGSYGRDTRGLIRMHQFDKVEMVQIVRPEVSMDALEEMTGHAEKVLELLGLPYRRMALCTGDMGFGATKTFDLEVWVPAQNTYREISSCSNVGDFQARRMQARCRTKADKKTRLVHTLNGSGLAVGRALVAVMENYQQADGRIEIPEVLRPYMKGQQYIG.

Residue 237 to 239 coordinates L-serine; that stretch reads TAE. ATP is bound at residue 268 to 270; the sequence is RSE. An L-serine-binding site is contributed by Glu-291. Residue 355–358 coordinates ATP; the sequence is EISS. Ser-391 is an L-serine binding site.

It belongs to the class-II aminoacyl-tRNA synthetase family. Type-1 seryl-tRNA synthetase subfamily. As to quaternary structure, homodimer. The tRNA molecule binds across the dimer.

It is found in the cytoplasm. It carries out the reaction tRNA(Ser) + L-serine + ATP = L-seryl-tRNA(Ser) + AMP + diphosphate + H(+). The enzyme catalyses tRNA(Sec) + L-serine + ATP = L-seryl-tRNA(Sec) + AMP + diphosphate + H(+). It participates in aminoacyl-tRNA biosynthesis; selenocysteinyl-tRNA(Sec) biosynthesis; L-seryl-tRNA(Sec) from L-serine and tRNA(Sec): step 1/1. Its function is as follows. Catalyzes the attachment of serine to tRNA(Ser). Is also able to aminoacylate tRNA(Sec) with serine, to form the misacylated tRNA L-seryl-tRNA(Sec), which will be further converted into selenocysteinyl-tRNA(Sec). This chain is Serine--tRNA ligase, found in Enterobacter sp. (strain 638).